The following is a 103-amino-acid chain: N(4)-acetylcytidine amidohydrolase (103 aa).

Residues Ile-6–Gln-94 enclose the ASCH domain. Catalysis depends on Lys-21, which acts as the Proton acceptor. The Nucleophile role is filled by Thr-24. Glu-74 serves as the catalytic Proton donor.

It belongs to the N(4)-acetylcytidine amidohydrolase family.

The enzyme catalyses N(4)-acetylcytidine + H2O = cytidine + acetate + H(+). It catalyses the reaction N(4)-acetyl-2'-deoxycytidine + H2O = 2'-deoxycytidine + acetate + H(+). The catalysed reaction is N(4)-acetylcytosine + H2O = cytosine + acetate + H(+). Catalyzes the hydrolysis of N(4)-acetylcytidine (ac4C). This is N(4)-acetylcytidine amidohydrolase from Citrobacter koseri (strain ATCC BAA-895 / CDC 4225-83 / SGSC4696).